A 137-amino-acid chain; its full sequence is Large ribosomal subunit protein uL16 (137 aa).

This sequence belongs to the universal ribosomal protein uL16 family. Part of the 50S ribosomal subunit.

Its function is as follows. Binds 23S rRNA and is also seen to make contacts with the A and possibly P site tRNAs. The sequence is that of Large ribosomal subunit protein uL16 from Psychrobacter arcticus (strain DSM 17307 / VKM B-2377 / 273-4).